The sequence spans 356 residues: Thrombopoietin (356 aa).

Residues M1 to S21 form the signal peptide. 2 cysteine pairs are disulfide-bonded: C28–C172 and C50–C106. N-linked (GlcNAc...) asparagine glycans are attached at residues N197, N206, N235, N249, N256, N336, and N351. The segment at G291 to T356 is disordered. The span at P330 to A339 shows a compositional bias: polar residues.

The protein belongs to the EPO/TPO family. As to expression, found mainly in the liver, kidney and skeletal muscle.

It localises to the secreted. Its function is as follows. Lineage-specific cytokine affecting the proliferation and maturation of megakaryocytes from their committed progenitor cells. It acts at a late stage of megakaryocyte development. It may be the major physiological regulator of circulating platelets. This chain is Thrombopoietin (Thpo), found in Mus musculus (Mouse).